We begin with the raw amino-acid sequence, 1443 residues long: MYAVYKQAHPPTGLEFSMYCNFFNNSERNLVVAGTSQLYVYRLNRDAEALTKNDRSTEGKAHREKLELAASFSFFGNVMSMASVQLAGAKRDALLLSFKDAKLSVVEYDPGTHDLKTLSLHYFEEPELRDGFVQNVHTPRVRVDPDGRCAAMLVYGTRLVVLPFRRESLAEEHEGLVGEGQRSSFLPSYIIDVRALDEKLLNIIDLQFLHGYYEPTLLILFEPNQTWPGRVAVRQDTCSIVAISLNITQKVHPVIWSLTSLPFDCTQALAVPKPIGGVVVFAVNSLLYLNQSVPPYGVALNSLTTGTTAFPLRTQEGVRITLDCAQATFISYDKMVISLKGGEIYVLTLITDGMRSVRAFHFDKAAASVLTTSMVTMEPGYLFLGSRLGNSLLLKYTEKLQEPPASAVREAADKEEPPSKKKRVDATAGWSAAGKSVPQDEVDEIEVYGSEAQSGTQLATYSFEVCDSILNIGPCANAAVGEPAFLSEEFQNSPEPDLEIVVCSGHGKNGALSVLQKSIRPQVVTTFELPGCYDMWTVIAPVRKEEEDNPKGEGTEQEPSTTPEADDDGRRHGFLILSREDSTMILQTGQEIMELDTSGFATQGPTVFAGNIGDNRYIVQVSPLGIRLLEGVNQLHFIPVDLGAPIVQCAVADPYVVIMSAEGHVTMFLLKSDSYGGRHHRLALHKPPLHHQSKVITLCLYRDLSGMFTTESRLGGARDELGGRSGPEAEGLGSETSPTVDDEEEMLYGDSGSLFSPSKEEARRSSQPPADRDPAPFRAEPTHWCLLVRENGTMEIYQLPDWRLVFLVKNFPVGQRVLVDSSFGQPTTQGEARREEATRQGELPLVKEVLLVALGSRQSRPYLLVHVDQELLIYEAFPHDSQLGQGNLKVRFKKVPHNINFREKKPKPSKKKAEGGGAEEGAGARGRVARFRYFEDIYGYSGVFICGPSPHWLLVTGRGALRLHPMAIDGPVDSFAPFHNVNCPRGFLYFNRQGELRISVLPAYLSYDAPWPVRKIPLRCTAHYVAYHVESKVYAVATSTNTPCARIPRMTGEEKEFETIERDERYIHPQQEAFSIQLISPVSWEAIPNARIELQEWEHVTCMKTVSLRSEETVSGLKGYVAAGTCLMQGEEVTCRGRILIMDVIEVVPEPGQPLTKNKFKVLYEKEQKGPVTALCHCNGHLVSAIGQKIFLWSLRASELTGMAFIDTQLYIHQMISVKNFILAADVMKSISLLRYQEESKTLSLVSRDAKPLEVYSVDFMVDNAQLGFLVSDRDRNLMVYMYLPEAKESFGGMRLLRRADFHVGAHVNTFWRTPCRGATEGLSKKSVVWENKHITWFATLDGGIGLLLPMQEKTYRRLLMLQNALTTMLPHHAGLNPRAFRMLHVDRRTLQNAVRNVLDGELLNRYLYLSTMERSELAKKIGTTPDIILDDLLETDRVTAHF.

Disordered stretches follow at residues 404–435 (PASAVREAADKEEPPSKKKRVDATAGWSAAGK), 546–570 (EEDNPKGEGTEQEPSTTPEADDDGR), 715–777 (GGAR…PAPF), and 901–921 (FREKKPKPSKKKAEGGGAEEG). Residues 410 to 419 (EAADKEEPPS) are compositionally biased toward basic and acidic residues. Phosphoserine occurs at positions 756 and 766. A compositionally biased stretch (basic and acidic residues) spans 758-775 (SKEEARRSSQPPADRDPA). Positions 893–908 (KKVPHNINFREKKPKP) match the Nuclear localization signal motif.

This sequence belongs to the CPSF1 family. As to quaternary structure, component of the cleavage and polyadenylation specificity factor (CPSF) complex, composed of CPSF1, CPSF2, CPSF3, CPSF4 and FIP1L1. Found in a complex with CPSF1, FIP1L1 and PAPOLA. Interacts with FIP1L1, TENT2/GLD2 and SRRM1. Interacts with TUT1; the interaction is direct and mediates the recruitment of the CPSF complex on the 3'UTR of selected pre-mRNAs. In terms of processing, the N-terminus is blocked. Widely expressed, with high expression in the retina.

The protein resides in the nucleus. It localises to the nucleoplasm. Its function is as follows. Component of the cleavage and polyadenylation specificity factor (CPSF) complex that plays a key role in pre-mRNA 3'-end formation, recognizing the AAUAAA signal sequence and interacting with poly(A) polymerase and other factors to bring about cleavage and poly(A) addition. This subunit is involved in the RNA recognition step of the polyadenylation reaction. May play a role in eye morphogenesis and the development of retinal ganglion cell projections to the midbrain. The polypeptide is Cleavage and polyadenylation specificity factor subunit 1 (CPSF1) (Homo sapiens (Human)).